A 207-amino-acid polypeptide reads, in one-letter code: LexA repressor (207 aa).

A DNA-binding region (H-T-H motif) is located at residues 28-48 (VREIGEAVGLASSSTVHGHLS). Catalysis depends on for autocatalytic cleavage activity residues S130 and K168.

This sequence belongs to the peptidase S24 family. In terms of assembly, homodimer.

It catalyses the reaction Hydrolysis of Ala-|-Gly bond in repressor LexA.. Represses a number of genes involved in the response to DNA damage (SOS response), including recA and lexA. In the presence of single-stranded DNA, RecA interacts with LexA causing an autocatalytic cleavage which disrupts the DNA-binding part of LexA, leading to derepression of the SOS regulon and eventually DNA repair. The sequence is that of LexA repressor from Staphylococcus aureus (strain Mu3 / ATCC 700698).